The following is a 449-amino-acid chain: Tol-Pal system protein TolB (449 aa).

The N-terminal stretch at 1–36 is a signal peptide; it reads MDCPNMPLHINRRQMLLSAATAAGALALGPARDAFG.

This sequence belongs to the TolB family. In terms of assembly, the Tol-Pal system is composed of five core proteins: the inner membrane proteins TolA, TolQ and TolR, the periplasmic protein TolB and the outer membrane protein Pal. They form a network linking the inner and outer membranes and the peptidoglycan layer.

The protein resides in the periplasm. Part of the Tol-Pal system, which plays a role in outer membrane invagination during cell division and is important for maintaining outer membrane integrity. This is Tol-Pal system protein TolB from Rhodopseudomonas palustris (strain HaA2).